Consider the following 474-residue polypeptide: tRNA-2-methylthio-N(6)-dimethylallyladenosine synthase (474 aa).

One can recognise an MTTase N-terminal domain in the interval 3–120; sequence KKLHIKTWGC…LPEMINSVRG (118 aa). [4Fe-4S] cluster-binding residues include Cys12, Cys49, Cys83, Cys157, Cys161, and Cys164. The 233-residue stretch at 143–375 folds into the Radical SAM core domain; the sequence is RAEGPTAFVS…QERINQQAMA (233 aa). The region spanning 378-441 is the TRAM domain; that stretch reads RRMLGSTQRI…PNSLRGKVVR (64 aa).

It belongs to the methylthiotransferase family. MiaB subfamily. As to quaternary structure, monomer. The cofactor is [4Fe-4S] cluster.

The protein localises to the cytoplasm. It catalyses the reaction N(6)-dimethylallyladenosine(37) in tRNA + (sulfur carrier)-SH + AH2 + 2 S-adenosyl-L-methionine = 2-methylsulfanyl-N(6)-dimethylallyladenosine(37) in tRNA + (sulfur carrier)-H + 5'-deoxyadenosine + L-methionine + A + S-adenosyl-L-homocysteine + 2 H(+). Its function is as follows. Catalyzes the methylthiolation of N6-(dimethylallyl)adenosine (i(6)A), leading to the formation of 2-methylthio-N6-(dimethylallyl)adenosine (ms(2)i(6)A) at position 37 in tRNAs that read codons beginning with uridine. This Salmonella arizonae (strain ATCC BAA-731 / CDC346-86 / RSK2980) protein is tRNA-2-methylthio-N(6)-dimethylallyladenosine synthase.